The following is a 253-amino-acid chain: Zinc finger protein JAGGED (253 aa).

The disordered stretch occupies residues 1–46 (MRHEENYLDLNNLPDDFSKDGNKQALEEGSSSGQRKKKGSKEGKDE). Basic and acidic residues predominate over residues 16-26 (DFSKDGNKQAL). Residues 51–73 (YECRFCSLKFCKSQALGGHMNRH) form a C2H2-type zinc finger.

As to quaternary structure, interacts with GATA18/HAN. Expressed in the emerging leaf, sepal, petal, stamen and carpel primordia. Not expressed in the apical shoot meristem (SAM).

Its subcellular location is the nucleus. Functionally, controls the morphogenesis of lateral organs. Functions in lateral organ shape and is sufficient to induce proliferation and growth of lateral organ tissue. Is necessary and sufficient for bract formation, but its expression is excluded from the cryptic bract, which could be a cause of bractless flowers in Arabidopsis. Participates with FIL and YAB3 in regulating valve margin development. Functions with JGL to define stamen and carpel shape. Functions with AS1 and AS2 in the sepal and petal primordia to repress boundary-specifying genes for normal development of the organs. This is Zinc finger protein JAGGED (JAG) from Arabidopsis thaliana (Mouse-ear cress).